The chain runs to 177 residues: Ureidoglycolate lyase (177 aa).

The protein belongs to the ureidoglycolate lyase family. As to quaternary structure, homodimer. The cofactor is Ni(2+).

It catalyses the reaction (S)-ureidoglycolate = urea + glyoxylate. The protein operates within nitrogen metabolism; (S)-allantoin degradation. Catalyzes the catabolism of the allantoin degradation intermediate (S)-ureidoglycolate, generating urea and glyoxylate. Involved in the utilization of allantoin as nitrogen source. This is Ureidoglycolate lyase from Burkholderia cepacia (Pseudomonas cepacia).